The sequence spans 249 residues: Transcription repressor MYB5 (249 aa).

HTH myb-type domains follow at residues 20–72 and 73–127; these read KMGM…MNYL and RPSV…RKKL. DNA-binding regions (H-T-H motif) lie at residues 48 to 72 and 100 to 123; these read WRSL…MNYL and WSLI…NTHL. Residues 133–180 are disordered; sequence DPQTHKPLDANNIHKPEEEVSGGQKYPLEPISSSHTDDTTVNGGDGDS. Residues 135–150 show a composition bias toward basic and acidic residues; it reads QTHKPLDANNIHKPEE.

As to quaternary structure, interacts with BHLH002/EGL3/MYC146, BHLH012/MYC1 and BHLH042/TT8. Siliques.

Its subcellular location is the nucleus. Functionally, transcription activator, when associated with BHLH002/EGL3/MYC146, BHLH012/MYC1 or BHLH042/TT8. The protein is Transcription repressor MYB5 (MYB5) of Arabidopsis thaliana (Mouse-ear cress).